Here is a 358-residue protein sequence, read N- to C-terminus: uncharacterized protein (358 aa).

The interval 324–358 (DMEVEETPPTTNKDLPRGATQPKRNSIKRVSKLID) is disordered. Basic residues predominate over residues 348 to 358 (NSIKRVSKLID).

This is an uncharacterized protein from Mycoplasma pneumoniae (strain ATCC 29342 / M129 / Subtype 1) (Mycoplasmoides pneumoniae).